Reading from the N-terminus, the 507-residue chain is Rhomboid protease GluP (507 aa).

The next 5 membrane-spanning stretches (helical) occupy residues 179 to 199, 229 to 249, 261 to 281, 283 to 303, and 312 to 332; these read FTYLFIALQILMFFLLEINGG, IVLHIGIAHLAFNTLALWSVG, FLLIYLAAGITGSIASFVFSP, PSAGASGAIFGCLGALLYVAL, and TIGTNIIVIIIINLGFGFAVS. The Nucleophile role is filled by Ser288. The active-site Charge relay system is His339. The next 2 membrane-spanning stretches (helical) occupy residues 340–360 and 365–385; these read IGGLIGGFFAAAALGLPKAGA and LLSAVLLIALAVGFLYYGLHS. 2 TPR repeats span residues 424-457 and 458-491; these read ADLLKILAVSDIQIGEYDQAVSLLERAVKKEPKD and HASYYNLALLYAEKNELAQAEKAIQTAVKLKPKE.

This sequence belongs to the peptidase S54 family.

It is found in the cell membrane. The catalysed reaction is Cleaves type-1 transmembrane domains using a catalytic dyad composed of serine and histidine that are contributed by different transmembrane domains.. Inhibited by dichloroisocoumarin (DCI) and N-p-tosyl-L-phenylalanine chloromethyl ketone (TPCK), but not by other serine protease inhibitors such as sulfonyl fluoride PMSF and 4-(2-aminoethyl)benzenesulfonyl fluoride (AEBSF). Its function is as follows. Rhomboid-type serine protease that catalyzes intramembrane proteolysis. Important for normal cell division and sporulation. May act as a glucose exporter. This chain is Rhomboid protease GluP (gluP), found in Bacillus subtilis (strain 168).